Consider the following 400-residue polypeptide: Phosphoglycerate kinase (400 aa).

Residues 24–26 (DFN), R40, 63–66 (HFGR), R121, and R154 contribute to the substrate site. ATP-binding positions include K205, G296, E327, and 356–359 (GGDS).

Belongs to the phosphoglycerate kinase family. As to quaternary structure, monomer.

Its subcellular location is the cytoplasm. The enzyme catalyses (2R)-3-phosphoglycerate + ATP = (2R)-3-phospho-glyceroyl phosphate + ADP. It participates in carbohydrate degradation; glycolysis; pyruvate from D-glyceraldehyde 3-phosphate: step 2/5. The polypeptide is Phosphoglycerate kinase (Nostoc punctiforme (strain ATCC 29133 / PCC 73102)).